The chain runs to 1222 residues: ATP-dependent helicase/nuclease subunit A (1222 aa).

Positions 39–495 (QKRTAQQIEA…ILLKENFRSQ (457 aa)) constitute a UvrD-like helicase ATP-binding domain. 60 to 67 (ASAGSGKT) lines the ATP pocket. In terms of domain architecture, UvrD-like helicase C-terminal spans 524–810 (QLIAGSHAQT…NLMTIHKSKG (287 aa)).

Belongs to the helicase family. AddA subfamily. In terms of assembly, heterodimer of AddA and AddB/RexB. It depends on Mg(2+) as a cofactor.

The catalysed reaction is Couples ATP hydrolysis with the unwinding of duplex DNA by translocating in the 3'-5' direction.. The enzyme catalyses ATP + H2O = ADP + phosphate + H(+). In terms of biological role, the heterodimer acts as both an ATP-dependent DNA helicase and an ATP-dependent, dual-direction single-stranded exonuclease. Recognizes the chi site generating a DNA molecule suitable for the initiation of homologous recombination. The AddA nuclease domain is required for chi fragment generation; this subunit has the helicase and 3' -&gt; 5' nuclease activities. This Streptococcus pyogenes serotype M18 (strain MGAS8232) protein is ATP-dependent helicase/nuclease subunit A.